Consider the following 206-residue polypeptide: Endoribonuclease YbeY (206 aa).

The interval 1 to 20 (MSQANHNDTHNNIDDNINNH) is disordered. Residues H168, H172, and H178 each contribute to the Zn(2+) site.

This sequence belongs to the endoribonuclease YbeY family. Zn(2+) is required as a cofactor.

Its subcellular location is the cytoplasm. In terms of biological role, single strand-specific metallo-endoribonuclease involved in late-stage 70S ribosome quality control and in maturation of the 3' terminus of the 16S rRNA. The chain is Endoribonuclease YbeY from Psychrobacter arcticus (strain DSM 17307 / VKM B-2377 / 273-4).